The sequence spans 72 residues: Exodeoxyribonuclease 7 small subunit (72 aa).

This sequence belongs to the XseB family. In terms of assembly, heterooligomer composed of large and small subunits.

It localises to the cytoplasm. The catalysed reaction is Exonucleolytic cleavage in either 5'- to 3'- or 3'- to 5'-direction to yield nucleoside 5'-phosphates.. In terms of biological role, bidirectionally degrades single-stranded DNA into large acid-insoluble oligonucleotides, which are then degraded further into small acid-soluble oligonucleotides. This chain is Exodeoxyribonuclease 7 small subunit, found in Chlamydia trachomatis serovar L2 (strain ATCC VR-902B / DSM 19102 / 434/Bu).